We begin with the raw amino-acid sequence, 531 residues long: Fatty acid--[acyl-carrier-protein] ligase MmaC (531 aa).

Residue Thr-169 participates in Mg(2+) binding. Residues Ile-218, Val-308, and Ser-312 each contribute to the ATP site. A Mg(2+)-binding site is contributed by Glu-313. Position 403 (Asp-403) interacts with ATP.

Belongs to the ATP-dependent AMP-binding enzyme family. Mg(2+) is required as a cofactor.

The enzyme catalyses a (2E)-enoyl fatty acid + holo-[ACP] + ATP = a (2E)-enoyl-[ACP] + AMP + diphosphate. It carries out the reaction a (2E)-enoyl fatty acid + ATP + H(+) = a (2E)-2-fatty-enoyl-AMP + diphosphate. The catalysed reaction is a (2E)-2-fatty-enoyl-AMP + holo-[ACP] = a (2E)-enoyl-[ACP] + AMP + H(+). It catalyses the reaction (2E)-decenoate + holo-[ACP] + ATP = (2E)-decenoyl-[ACP] + AMP + diphosphate. The enzyme catalyses a (3R)-3-isocyanyl-fatty acid + holo-[ACP] + ATP = a (3R)-3-isocyanyl-fatty acyl-[ACP] + AMP + diphosphate. It carries out the reaction a (3R)-3-isocyanyl-fatty acid + ATP + H(+) = a (3R)-3-isocyanyl-fatty acyl-AMP + diphosphate. The catalysed reaction is a (3R)-3-isocyanyl-fatty acyl-AMP + holo-[ACP] = a (3R)-3-isocyanyl-fatty acyl-[ACP] + AMP + H(+). Acyl:acyl-carrier protein ligase involved in the biosynthesis of a unique class of isonitrile lipopeptides (INLPs) that seem to play a role in metal acquisition in M.marinum. Acts twice during the INLP pathway, catalyzing the activation of (2E)-2-decenoate as well as probably the corresponding (3R)-3-isocyanyl-fatty acid as acyl-adenylates (acyl-AMP), and then the acyl transfer to the dedicated acyl-carrier protein MmaB. This chain is Fatty acid--[acyl-carrier-protein] ligase MmaC, found in Mycobacterium marinum (strain ATCC BAA-535 / M).